A 462-amino-acid chain; its full sequence is Argininosuccinate lyase (462 aa).

Belongs to the lyase 1 family. Argininosuccinate lyase subfamily.

The protein resides in the cytoplasm. The enzyme catalyses 2-(N(omega)-L-arginino)succinate = fumarate + L-arginine. It functions in the pathway amino-acid biosynthesis; L-arginine biosynthesis; L-arginine from L-ornithine and carbamoyl phosphate: step 3/3. The polypeptide is Argininosuccinate lyase (Bacillus cereus (strain ATCC 14579 / DSM 31 / CCUG 7414 / JCM 2152 / NBRC 15305 / NCIMB 9373 / NCTC 2599 / NRRL B-3711)).